The primary structure comprises 440 residues: Light-independent protochlorophyllide reductase subunit B (440 aa).

Asp-36 contributes to the [4Fe-4S] cluster binding site. 427–428 (KD) contacts substrate.

This sequence belongs to the ChlB/BchB/BchZ family. As to quaternary structure, protochlorophyllide reductase is composed of three subunits; ChlL, ChlN and ChlB. Forms a heterotetramer of two ChlB and two ChlN subunits. [4Fe-4S] cluster serves as cofactor.

Its subcellular location is the plastid. It is found in the cyanelle. The enzyme catalyses chlorophyllide a + oxidized 2[4Fe-4S]-[ferredoxin] + 2 ADP + 2 phosphate = protochlorophyllide a + reduced 2[4Fe-4S]-[ferredoxin] + 2 ATP + 2 H2O. The protein operates within porphyrin-containing compound metabolism; chlorophyll biosynthesis (light-independent). Its function is as follows. Component of the dark-operative protochlorophyllide reductase (DPOR) that uses Mg-ATP and reduced ferredoxin to reduce ring D of protochlorophyllide (Pchlide) to form chlorophyllide a (Chlide). This reaction is light-independent. The NB-protein (ChlN-ChlB) is the catalytic component of the complex. In Cyanophora paradoxa, this protein is Light-independent protochlorophyllide reductase subunit B.